The primary structure comprises 115 residues: MRMDGSDFEDRKVSKPSPVLPFDVSNIGDLSQGVHSPLGISHFDSKNPTPFGRSTKNSVYEYETVTPYSRFKVDKKFGSATSVSPVHTKAEEPGLGLTPMNSADFSNKIASRYRS.

The tract at residues 82–115 is disordered; that stretch reads SVSPVHTKAEEPGLGLTPMNSADFSNKIASRYRS. The segment covering 99-109 has biased composition (polar residues); that stretch reads PMNSADFSNKI.

The protein resides in the nucleus. In terms of biological role, has a role in meiosis. The chain is Meiotically up-regulated gene 168 protein (mug168) from Schizosaccharomyces pombe (strain 972 / ATCC 24843) (Fission yeast).